The chain runs to 153 residues: Pheromone-binding protein Gp-9 (153 aa).

A signal peptide spans 1–19 (MKTFVLHIFIFALVAFASA). 3 cysteine pairs are disulfide-bonded: Cys-37–Cys-77, Cys-73–Cys-129, and Cys-118–Cys-138.

Belongs to the PBP/GOBP family. Homodimer.

The protein localises to the secreted. Its function is as follows. Colony queen number, a major feature of social organization, is associated with worker genotype for Gp-9. Colonies are headed by either a single reproductive queen (monogyne form) or multiple queens (polygyne form). Differences in worker Gp-9 genotypes between social forms may cause differences in workers' abilities to recognize queens and regulate their numbers. The sequence is that of Pheromone-binding protein Gp-9 from Solenopsis pusillignis (Fire ant).